A 522-amino-acid chain; its full sequence is 2-isopropylmalate synthase (522 aa).

The Pyruvate carboxyltransferase domain maps to 5-267; that stretch reads VIIFDTTLRD…ETGINAKEIH (263 aa). Residues aspartate 14, histidine 202, histidine 204, and asparagine 238 each contribute to the Mn(2+) site. The regulatory domain stretch occupies residues 392–522; sequence QLQQLVVQSD…MQKNRELGGV (131 aa).

The protein belongs to the alpha-IPM synthase/homocitrate synthase family. LeuA type 1 subfamily. In terms of assembly, homodimer. Mn(2+) serves as cofactor.

It is found in the cytoplasm. It catalyses the reaction 3-methyl-2-oxobutanoate + acetyl-CoA + H2O = (2S)-2-isopropylmalate + CoA + H(+). It functions in the pathway amino-acid biosynthesis; L-leucine biosynthesis; L-leucine from 3-methyl-2-oxobutanoate: step 1/4. Functionally, catalyzes the condensation of the acetyl group of acetyl-CoA with 3-methyl-2-oxobutanoate (2-ketoisovalerate) to form 3-carboxy-3-hydroxy-4-methylpentanoate (2-isopropylmalate). The polypeptide is 2-isopropylmalate synthase (Shewanella baltica (strain OS195)).